Consider the following 260-residue polypeptide: Zinc import ATP-binding protein ZnuC (260 aa).

An ABC transporter domain is found at 14-229 (LTARNLCADR…PEFARLFGDQ (216 aa)). An ATP-binding site is contributed by 46 to 53 (GPNGAGKS).

Belongs to the ABC transporter superfamily. Zinc importer (TC 3.A.1.15.5) family. As to quaternary structure, the complex is composed of two ATP-binding proteins (ZnuC), two transmembrane proteins (ZnuB) and a solute-binding protein (ZnuA).

Its subcellular location is the cell inner membrane. It carries out the reaction Zn(2+)(out) + ATP(in) + H2O(in) = Zn(2+)(in) + ADP(in) + phosphate(in) + H(+)(in). Its function is as follows. Part of the ABC transporter complex ZnuABC involved in zinc import. Responsible for energy coupling to the transport system. The protein is Zinc import ATP-binding protein ZnuC of Magnetococcus marinus (strain ATCC BAA-1437 / JCM 17883 / MC-1).